A 95-amino-acid chain; its full sequence is Large ribosomal subunit protein bL25 (95 aa).

It belongs to the bacterial ribosomal protein bL25 family. Part of the 50S ribosomal subunit; part of the 5S rRNA/L5/L18/L25 subcomplex. Contacts the 5S rRNA. Binds to the 5S rRNA independently of L5 and L18.

Functionally, this is one of the proteins that binds to the 5S RNA in the ribosome where it forms part of the central protuberance. This Shewanella sediminis (strain HAW-EB3) protein is Large ribosomal subunit protein bL25.